The primary structure comprises 1065 residues: Bifunctional cytochrome P450/NADPH--P450 reductase (1065 aa).

The interval 1-479 is cytochrome P450; sequence MEKKVSAIPQ…EDKLKNDEIK (479 aa). Residue C405 coordinates heme. Positions 480-1065 are NADPH--P450 reductase; that stretch reads QHVQKTPSII…RYGKDVWAGI (586 aa). The region spanning 496–635 is the Flavodoxin-like domain; that stretch reads LLVLYGSDTG…QLEQWKQNMW (140 aa). FMN is bound by residues 502-507, 549-552, 583-585, and 591-593; these read SDTGVA, SYNG, CGD, and TYQ. The FAD-binding FR-type domain occupies 674-907; the sequence is YEAVYASILE…RTPQSNFELP (234 aa).

It in the N-terminal section; belongs to the cytochrome P450 family. Requires heme as cofactor. FAD serves as cofactor. FMN is required as a cofactor.

The catalysed reaction is 2 oxidized [cytochrome P450] + NADPH = 2 reduced [cytochrome P450] + NADP(+) + H(+). It catalyses the reaction an organic molecule + reduced [NADPH--hemoprotein reductase] + O2 = an alcohol + oxidized [NADPH--hemoprotein reductase] + H2O + H(+). In terms of biological role, functions as a fatty acid monooxygenase. Catalyzes hydroxylation of fatty acids at omega-1, omega-2 and omega-3 positions, yielding primarily omega-1 and omega-2 hydroxylated products. Metabolizes unsaturated and saturated fatty acids as well as N-acylamino acids. Has a preference for long-chain unsaturated fatty acids over saturated fatty acids. Shows activity toward saturated fatty acids with a chain length of 9-18 carbons with preference for longer fatty acids. Also displays a NADPH-dependent reductase activity in the C-terminal domain, which allows electron transfer from NADPH to the heme iron of the cytochrome P450 N-terminal domain. This Bacillus cereus (strain ATCC 14579 / DSM 31 / CCUG 7414 / JCM 2152 / NBRC 15305 / NCIMB 9373 / NCTC 2599 / NRRL B-3711) protein is Bifunctional cytochrome P450/NADPH--P450 reductase.